The sequence spans 78 residues: Acyl carrier protein (78 aa).

In terms of domain architecture, Carrier spans serine 2–lysine 77. At serine 37 the chain carries O-(pantetheine 4'-phosphoryl)serine.

The protein belongs to the acyl carrier protein (ACP) family. Post-translationally, 4'-phosphopantetheine is transferred from CoA to a specific serine of apo-ACP by AcpS. This modification is essential for activity because fatty acids are bound in thioester linkage to the sulfhydryl of the prosthetic group.

Its subcellular location is the cytoplasm. It participates in lipid metabolism; fatty acid biosynthesis. Its function is as follows. Carrier of the growing fatty acid chain in fatty acid biosynthesis. The polypeptide is Acyl carrier protein (Flavobacterium johnsoniae (strain ATCC 17061 / DSM 2064 / JCM 8514 / BCRC 14874 / CCUG 350202 / NBRC 14942 / NCIMB 11054 / UW101) (Cytophaga johnsonae)).